Consider the following 362-residue polypeptide: Chemerin-like receptor 1 (362 aa).

The Extracellular segment spans residues 1–37 (MEAEDYNASYEDYPDDVDPIVVLEELSPLEGRVVRIL). Asn-7 is a glycosylation site (N-linked (GlcNAc...) asparagine). A helical transmembrane segment spans residues 38 to 58 (LVAVYSVICLLGILGNGLVIV). Residues 59-70 (MITCKMKRTVNT) are Cytoplasmic-facing. A helical transmembrane segment spans residues 71–91 (VWFLNLAVADFLFNVFLPVHI). At 92–108 (AYAALDYHWVFGTAMCK) the chain is on the extracellular side. Cys-107 and Cys-184 form a disulfide bridge. A helical transmembrane segment spans residues 109–129 (ISNFLLIHNMFTSVFLLTVIS). Over 130-151 (FDRCVSVLLPVWSQNHRSVRLA) the chain is Cytoplasmic. Residues 152–172 (YTACLVIWVLAFFLSSPSLVF) form a helical membrane-spanning segment. Residues 173 to 219 (RDTARLHGKISCFNNFSLSAAVSSPWPAHPQVDPVGSGRHKVVTITR) lie on the Extracellular side of the membrane. Asn-187 carries N-linked (GlcNAc...) asparagine glycosylation. The chain crosses the membrane as a helical span at residues 220 to 240 (FLCGFLVPGLITTACYLTIVY). Over 241–255 (KLQRSRLAKTKKPFK) the chain is Cytoplasmic. The helical transmembrane segment at 256–276 (IILTIIVTFFLCWCPYHAFYL) threads the bilayer. Over 277–281 (LELRR) the chain is Extracellular. The chain crosses the membrane as a helical span at residues 282 to 302 (GSVPPSVFSLGVPLATAIAIA). Residues 303 to 362 (NSCMNPILYVFMGQDFKKFRVALFSRLVNALSEDTGHSSYPSHRSFTKMSSMNERETGML) are Cytoplasmic-facing. Ser-334 bears the Phosphoserine mark. Positions 336–362 (DTGHSSYPSHRSFTKMSSMNERETGML) are disordered. Thr-337 is subject to Phosphothreonine. A compositionally biased stretch (polar residues) spans 339 to 354 (HSSYPSHRSFTKMSSM). 3 positions are modified to phosphoserine: Ser-344, Ser-347, and Ser-353.

It belongs to the chemokine-like receptor (CMKLR) family. As to expression, widely expressed in several tissues including adipose, muscle, liver and brain.

It is found in the cell membrane. Its function is as follows. Receptor for the chemoattractant adipokine chemerin/RARRES2 and for the omega-3 fatty acid derived molecule resolvin E1. Interaction with RARRES2 initiates activation of G proteins G(i)/G(o) and beta-arrestin pathways inducing cellular responses via second messenger pathways such as intracellular calcium mobilization, phosphorylation of MAP kinases MAPK1/MAPK3 (ERK1/2), TYRO3, MAPK14/P38MAPK and PI3K leading to multifunctional effects, like, reduction of immune responses, enhancing of adipogenesis and angionesis. Resolvin E1 down-regulates cytokine production in macrophages by reducing the activation of MAPK1/3 (ERK1/2) and NF-kappa-B. Positively regulates adipogenesis and adipocyte metabolism. This chain is Chemerin-like receptor 1 (CMLKR1), found in Bos taurus (Bovine).